The primary structure comprises 60 residues: Large ribosomal subunit protein uL30 (60 aa).

The protein belongs to the universal ribosomal protein uL30 family. As to quaternary structure, part of the 50S ribosomal subunit.

The sequence is that of Large ribosomal subunit protein uL30 from Streptococcus pyogenes serotype M1.